Reading from the N-terminus, the 53-residue chain is Large ribosomal subunit protein eL24 (53 aa).

Cys-4, Cys-7, Cys-30, and Cys-34 together coordinate Zn(2+). A C4-type zinc finger spans residues 4–34 (CSFCHEEIEPGTGKMYVKRDGTIYFFCSSKC).

Belongs to the eukaryotic ribosomal protein eL24 family. Part of the 50S ribosomal subunit. Forms a cluster with proteins L3 and L14. Zn(2+) serves as cofactor.

Its function is as follows. Binds to the 23S rRNA. This chain is Large ribosomal subunit protein eL24, found in Methanothermobacter thermautotrophicus (strain ATCC 29096 / DSM 1053 / JCM 10044 / NBRC 100330 / Delta H) (Methanobacterium thermoautotrophicum).